The sequence spans 119 residues: Large ribosomal subunit protein uL18 (119 aa).

Belongs to the universal ribosomal protein uL18 family. Part of the 50S ribosomal subunit; part of the 5S rRNA/L5/L18/L25 subcomplex. Contacts the 5S and 23S rRNAs.

This is one of the proteins that bind and probably mediate the attachment of the 5S RNA into the large ribosomal subunit, where it forms part of the central protuberance. The protein is Large ribosomal subunit protein uL18 of Chlorobaculum tepidum (strain ATCC 49652 / DSM 12025 / NBRC 103806 / TLS) (Chlorobium tepidum).